The following is a 328-amino-acid chain: Diaminopimelate epimerase (328 aa).

Substrate contacts are provided by asparagine 14 and asparagine 73. The active-site Proton donor is the cysteine 82. Substrate-binding positions include 83–84 (GN), asparagine 170, asparagine 206, and 224–225 (ER). Cysteine 233 (proton acceptor) is an active-site residue. Substrate is bound at residue 234–235 (GT).

This sequence belongs to the diaminopimelate epimerase family. As to quaternary structure, homodimer.

It is found in the cytoplasm. The enzyme catalyses (2S,6S)-2,6-diaminopimelate = meso-2,6-diaminopimelate. Its pathway is amino-acid biosynthesis; L-lysine biosynthesis via DAP pathway; DL-2,6-diaminopimelate from LL-2,6-diaminopimelate: step 1/1. Its function is as follows. Catalyzes the stereoinversion of LL-2,6-diaminopimelate (L,L-DAP) to meso-diaminopimelate (meso-DAP), a precursor of L-lysine and an essential component of the bacterial peptidoglycan. This is Diaminopimelate epimerase from Listeria welshimeri serovar 6b (strain ATCC 35897 / DSM 20650 / CCUG 15529 / CIP 8149 / NCTC 11857 / SLCC 5334 / V8).